A 142-amino-acid polypeptide reads, in one-letter code: Hemoglobin subunit alpha-1 (142 aa).

Residues 2–142 (VLSPADKTNI…VSTVLTSKYR (141 aa)) form the Globin domain. His59 lines the O2 pocket. Residue His88 participates in heme b binding.

This sequence belongs to the globin family. Heterotetramer of two alpha chains and two beta chains. In terms of tissue distribution, red blood cells.

Involved in oxygen transport from the lung to the various peripheral tissues. The sequence is that of Hemoglobin subunit alpha-1 from Arctocephalus galapagoensis (Galapagoes fur seal).